The following is a 1091-amino-acid chain: Rho GTPase-activating protein 7 (1091 aa).

The region spanning 11 to 78 (LTQIEAKEAC…LNKCAVMKLE (68 aa)) is the SAM domain. A phosphoserine mark is found at Ser-86, Ser-89, and Ser-320. Residues 273-447 (QLNCVEISAL…RLSIYDNVPG (175 aa)) form a focal adhesion-targeting (FAT) region. Disordered regions lie at residues 292-327 (VRKRSVSNSTQTSSSSSQSETSSAVSTPSPVTRTRS), 382-439 (PKAL…SSRL), and 491-553 (SDEG…GVGA). Low complexity-rich tracts occupy residues 297–323 (VSNSTQTSSSSSQSETSSAVSTPSPVT) and 386–400 (SNGSFPPSGNNSSVN). A compositionally biased stretch (basic and acidic residues) spans 414–425 (LRRENSSDSPKE). A compositionally biased stretch (polar residues) spans 499-511 (ALDSVSPCPSSPK). Residues 513–523 (IHLDVDNDRAT) show a composition bias toward basic and acidic residues. Over residues 526-535 (DLDSTGNSLN) the composition is skewed to polar residues. The polybasic cluster (PBR) stretch occupies residues 614 to 636 (KHGFSWAVPKFMKRIKVPDYKDR). The Rho-GAP domain occupies 641-847 (VPLTVNVQRT…HMIAECKKLF (207 aa)). In terms of domain architecture, START spans 877-1084 (RNDESADYQH…RDSFSNQNTE (208 aa)).

In terms of assembly, interacts with EF1A1, facilitates EF1A1 distribution to the membrane periphery and ruffles upon growth factor stimulation and suppresses cell migration. Interacts with tensin TNS1 (via N-terminus); the interaction is decreased by phosphorylation of TNS1. Interacts with TNS3 and PTEN; in resting cells, interacts with TNS3 (via C2 tensin-type domain) but, following growth factor stimulation, TNS3 and PTEN are phosphorylated which leads to weakened interaction with TNS3 and enhanced interaction with PTEN. Interacts (via C-terminus) with tensin TNS4 (via SH2 domain); the interaction is independent of tyrosine phosphorylation of DLC1.

It is found in the cytoplasm. It localises to the cell junction. The protein resides in the focal adhesion. The protein localises to the membrane. Its function is as follows. Functions as a GTPase-activating protein for the small GTPases RHOA, RHOB, RHOC and CDC42, terminating their downstream signaling. This induces morphological changes and detachment through cytoskeletal reorganization, playing a critical role in biological processes such as cell migration and proliferation. Also functions in vivo as an activator of the phospholipase PLCD1. Active DLC1 increases cell migration velocity but reduces directionality. Required for growth factor-induced epithelial cell migration; in resting cells, interacts with TNS3 while PTEN interacts with the p85 regulatory subunit of the PI3K kinase complex but growth factor stimulation induces phosphorylation of TNS3 and PTEN, causing them to change their binding preference so that PTEN interacts with DLC1 and TNS3 interacts with p85. The PTEN-DLC1 complex translocates to the posterior of migrating cells to activate RHOA while the TNS3-p85 complex translocates to the leading edge of migrating cells to promote RAC1 activation. This is Rho GTPase-activating protein 7 (DLC1) from Canis lupus familiaris (Dog).